Reading from the N-terminus, the 338-residue chain is Glyceraldehyde-3-phosphate dehydrogenase 2 (338 aa).

NAD(+) contacts are provided by residues 13–14, D35, and R80; that span reads RI. Residues 151–153, T182, 211–212, and R234 contribute to the D-glyceraldehyde 3-phosphate site; these read SCT and TG. The active-site Nucleophile is C152. N316 is a binding site for NAD(+).

It belongs to the glyceraldehyde-3-phosphate dehydrogenase family. Homotetramer.

Its subcellular location is the cytoplasm. It carries out the reaction D-glyceraldehyde 3-phosphate + phosphate + NAD(+) = (2R)-3-phospho-glyceroyl phosphate + NADH + H(+). It participates in carbohydrate degradation; glycolysis; pyruvate from D-glyceraldehyde 3-phosphate: step 1/5. Its activity is regulated as follows. Inhibited by koningic acid through the interaction of cysteine residues with koningic acid even at very low concentrations. The chain is Glyceraldehyde-3-phosphate dehydrogenase 2 (gpd2) from Trichoderma koningii (Hypocrea koningii).